Reading from the N-terminus, the 78-residue chain is Large ribosomal subunit protein bL28 (78 aa).

It belongs to the bacterial ribosomal protein bL28 family.

This Methylococcus capsulatus (strain ATCC 33009 / NCIMB 11132 / Bath) protein is Large ribosomal subunit protein bL28.